A 1013-amino-acid polypeptide reads, in one-letter code: AP-2 complex subunit alpha-2 (1013 aa).

4 HEAT repeats span residues 254–289, 354–391, 393–430, and 521–565; these read AMRA…VVKN, DIIK…VSNA, DIVE…DLSW, and TVST…CIDV. Positions 652–676 are disordered; the sequence is STDPESVARSLSHPNGTLSNIDPQT. The segment covering 663–675 has biased composition (polar residues); the sequence is SHPNGTLSNIDPQ. The region spanning 742 to 841 is the GAE domain; the sequence is ALCLKDSGVL…LDFSYKFGTN (100 aa). The interval 760-1013 is required for AP180 binding; the sequence is GIKAEWRGHH…DPGAMLAGLL (254 aa).

Belongs to the adaptor complexes large subunit family. In terms of assembly, adaptor protein complex 2 (AP-2) is a heterotetramer composed of two large adaptins (alpha-type and beta-type subunits), a medium adaptin (mu-type subunit) and a small adaptin (sigma-type subunit). Interacts with AP180.

Its subcellular location is the membrane. The protein localises to the coated pit. In terms of biological role, subunit of the adaptor protein complex 2 (AP-2). Adaptor protein complexes function in protein transport via transport vesicles in different membrane traffic pathways. Adaptor protein complexes are vesicle coat components and appear to be involved in cargo selection and vesicle formation. AP-2 is involved in clathrin-dependent endocytosis in which cargo proteins are incorporated into vesicles surrounded by clathrin (clathrin-coated vesicles, CCVs) which are destined for fusion with the early endosome. The complex binds polyphosphoinositides. The protein is AP-2 complex subunit alpha-2 (ALPHAC-AD) of Arabidopsis thaliana (Mouse-ear cress).